We begin with the raw amino-acid sequence, 347 residues long: 4-hydroxyproline 2-epimerase (347 aa).

Gln85 contributes to the substrate binding site. Ser93 acts as the Proton acceptor in catalysis. Substrate is bound by residues 94-95 (GS) and Asp251. The Proton donor role is filled by Cys255. 256–257 (GT) provides a ligand contact to substrate.

This sequence belongs to the proline racemase family.

The enzyme catalyses trans-4-hydroxy-L-proline = cis-4-hydroxy-D-proline. Functionally, catalyzes the epimerization of trans-4-hydroxy-L-proline (t4LHyp) to cis-4-hydroxy-D-proline (c4DHyp). May be involved in a degradation pathway of t4LHyp. Can also catalyze the epimerization of trans-3-hydroxy-L-proline (t3LHyp) to cis-3-hydroxy-D-proline (c3DHyp) in vitro. Displays no proline racemase activity. The protein is 4-hydroxyproline 2-epimerase of Allorhizobium ampelinum (strain ATCC BAA-846 / DSM 112012 / S4) (Agrobacterium vitis (strain S4)).